Here is a 395-residue protein sequence, read N- to C-terminus: Protein BUR2 (395 aa).

Disordered regions lie at residues 1 to 31 (MSAT…ASSG) and 372 to 395 (AKQE…KPKI). S24 carries the post-translational modification Phosphoserine.

Belongs to the BUR kinase complex composed of SGV1/BUR1 and BUR2. Interacts with SGV1.

It localises to the nucleus. In terms of biological role, component of the BUR kinase complex involved in transcription regulation. This complex phosphorylates 'Ser-120' of the UBC2/RAD6 ubiquitin-conjugating enzyme (E2), leading to monoubiquitination of histone H2B, the localization of the PAF1 complex to the chromatin, and the silencing of telomeric-associated genes. Also required for histone H3 'Lys-4' trimethylation. May phosphorylate the 'Ser-5' of the RBP1 carboxy-terminal domain (CTD) repeats. Necessary for the recovery from pheromone-induced growth arrest in the cell cycle G1 phase. Also required for vegetative growth itself. The kinase activity of the complex requires the presence of BUR2. Overexpression of BUR2 interferes with mitotic chromosome segregation. The sequence is that of Protein BUR2 (BUR2) from Saccharomyces cerevisiae (strain ATCC 204508 / S288c) (Baker's yeast).